The following is a 955-amino-acid chain: Glycine dehydrogenase (decarboxylating) (955 aa).

Lys-702 bears the N6-(pyridoxal phosphate)lysine mark.

Belongs to the GcvP family. As to quaternary structure, the glycine cleavage system is composed of four proteins: P, T, L and H. Pyridoxal 5'-phosphate serves as cofactor.

The catalysed reaction is N(6)-[(R)-lipoyl]-L-lysyl-[glycine-cleavage complex H protein] + glycine + H(+) = N(6)-[(R)-S(8)-aminomethyldihydrolipoyl]-L-lysyl-[glycine-cleavage complex H protein] + CO2. Its function is as follows. The glycine cleavage system catalyzes the degradation of glycine. The P protein binds the alpha-amino group of glycine through its pyridoxal phosphate cofactor; CO(2) is released and the remaining methylamine moiety is then transferred to the lipoamide cofactor of the H protein. This Stenotrophomonas maltophilia (strain R551-3) protein is Glycine dehydrogenase (decarboxylating).